Here is a 315-residue protein sequence, read N- to C-terminus: MMVNIPVIENFLSNSCFLILFLTTVYYWLKIGFGGKSSFSFTGLTGYGSALCCLTLQLILRWVDSGHFPLSNLYESLIFLAWCLLLLYIYIEVSTKTLFLGVLTSPAILCLVAFTDFSLPTELQQSTPLVPALQSNWLVMHVTVMIASYAALLLGCFIAIAYLVLSKFFIKTTFVTAPLSSQNTVLRQESFLEEKQKTDIVFEKNDKNLKFLFFLDNLSYRTIGIGFCFLTLGILSGAIWANETWGNYWSWDPKETWAFITWLTFACYLHSRLVGGWTGSKPALVASFGFLVVWVCYLGVNLLGQGLHSYGFLNV.

The next 8 helical transmembrane spans lie at 15–35, 39–59, 73–93, 97–117, 144–164, 222–242, 257–277, and 283–303; these read SCFL…GFGG, FSFT…LQLI, LYES…YIEV, TLFL…FTDF, VMIA…AYLV, TIGI…IWAN, WAFI…VGGW, and ALVA…VNLL.

The protein belongs to the CcmF/CycK/Ccl1/NrfE/CcsA family. As to quaternary structure, may interact with Ccs1.

Its subcellular location is the plastid. The protein localises to the chloroplast thylakoid membrane. In terms of biological role, required during biogenesis of c-type cytochromes (cytochrome c6 and cytochrome f) at the step of heme attachment. The sequence is that of Cytochrome c biogenesis protein CcsA from Chlorella vulgaris (Green alga).